A 616-amino-acid polypeptide reads, in one-letter code: MAU2 chromatid cohesion factor homolog (616 aa).

TPR repeat units follow at residues 90–123 (FDTASLLAQLYQQQEQSSLAKPVLRKAIELSQHN), 445–478 (GSFYYVQGLNAFHKSSFHEAKRFLRETLKMANAE), and 485–518 (SCSLVLLSHVFLSIGNSKESMNMVTPAMQLASKI).

It belongs to the SCC4/mau-2 family. In terms of assembly, component of the cohesin loading complex.

It is found in the nucleus. The protein localises to the nucleoplasm. In terms of biological role, required for association of the cohesin complex with chromatin during interphase. Plays a role in sister chromatid cohesion and normal progression through prometaphase. The polypeptide is MAU2 chromatid cohesion factor homolog (Culex quinquefasciatus (Southern house mosquito)).